Here is a 396-residue protein sequence, read N- to C-terminus: 1-deoxy-D-xylulose 5-phosphate reductoisomerase (396 aa).

T15, G16, S17, I18, G41, and N130 together coordinate NADPH. A 1-deoxy-D-xylulose 5-phosphate-binding site is contributed by K131. E132 serves as a coordination point for NADPH. D155 lines the Mn(2+) pocket. 1-deoxy-D-xylulose 5-phosphate contacts are provided by S156, E157, S181, and H204. E157 contributes to the Mn(2+) binding site. G210 serves as a coordination point for NADPH. Positions 217, 222, 223, and 226 each coordinate 1-deoxy-D-xylulose 5-phosphate. E226 provides a ligand contact to Mn(2+).

This sequence belongs to the DXR family. The cofactor is Mg(2+). Mn(2+) serves as cofactor.

It carries out the reaction 2-C-methyl-D-erythritol 4-phosphate + NADP(+) = 1-deoxy-D-xylulose 5-phosphate + NADPH + H(+). It participates in isoprenoid biosynthesis; isopentenyl diphosphate biosynthesis via DXP pathway; isopentenyl diphosphate from 1-deoxy-D-xylulose 5-phosphate: step 1/6. Its function is as follows. Catalyzes the NADPH-dependent rearrangement and reduction of 1-deoxy-D-xylulose-5-phosphate (DXP) to 2-C-methyl-D-erythritol 4-phosphate (MEP). The chain is 1-deoxy-D-xylulose 5-phosphate reductoisomerase from Bifidobacterium longum subsp. infantis (strain ATCC 15697 / DSM 20088 / JCM 1222 / NCTC 11817 / S12).